The chain runs to 194 residues: Protein GrpE (194 aa).

The span at 1-13 shows a compositional bias: polar residues; that stretch reads MENTQENPTSQNP. The disordered stretch occupies residues 1 to 50; it reads MENTQENPTSQNPKPAEETARQAAEAAAPQQEAAANAATDSPASAEQAAL. Residues 21–50 are compositionally biased toward low complexity; it reads RQAAEAAAPQQEAAANAATDSPASAEQAAL.

This sequence belongs to the GrpE family. As to quaternary structure, homodimer.

Its subcellular location is the cytoplasm. Participates actively in the response to hyperosmotic and heat shock by preventing the aggregation of stress-denatured proteins, in association with DnaK and GrpE. It is the nucleotide exchange factor for DnaK and may function as a thermosensor. Unfolded proteins bind initially to DnaJ; upon interaction with the DnaJ-bound protein, DnaK hydrolyzes its bound ATP, resulting in the formation of a stable complex. GrpE releases ADP from DnaK; ATP binding to DnaK triggers the release of the substrate protein, thus completing the reaction cycle. Several rounds of ATP-dependent interactions between DnaJ, DnaK and GrpE are required for fully efficient folding. The protein is Protein GrpE of Paraburkholderia xenovorans (strain LB400).